The sequence spans 228 residues: ATP synthase subunit a (228 aa).

The next 7 membrane-spanning stretches (helical) occupy residues 16–36 (GQEWIILSHYVLVIGIIFIIA), 45–65 (LVPTGSQNVLEAFVGGIISMG), 80–100 (LIGSLALVIFVSNMIGVIPGF), 106–126 (NINFTLSLALIVFVYYNYLGI), 138–158 (FMGPMPVLAPLMFPIEIISHL), 178–198 (FLMVLLMLVPWILPLPGFFLL), and 201–221 (FGVLQAFIFSILTYVYIAGSI).

It belongs to the ATPase A chain family. As to quaternary structure, F-type ATPases have 2 components, CF(1) - the catalytic core - and CF(0) - the membrane proton channel. CF(1) has five subunits: alpha(3), beta(3), gamma(1), delta(1), epsilon(1). CF(0) has three main subunits: a(1), b(2) and c(9-12). The alpha and beta chains form an alternating ring which encloses part of the gamma chain. CF(1) is attached to CF(0) by a central stalk formed by the gamma and epsilon chains, while a peripheral stalk is formed by the delta and b chains.

Its subcellular location is the cell inner membrane. In terms of biological role, key component of the proton channel; it plays a direct role in the translocation of protons across the membrane. The chain is ATP synthase subunit a from Aliarcobacter butzleri (strain RM4018) (Arcobacter butzleri).